The primary structure comprises 366 residues: Isocitrate dehydrogenase [NAD] subunit alpha, mitochondrial (366 aa).

Residues 1–27 constitute a mitochondrion transit peptide; that stretch reads MAGPAWISKVSRLLGAFHNPKQVTRGF. K77 is modified (N6-succinyllysine). Position 101 is a phosphothreonine (T101). Substrate is bound by residues R115, R125, and R146. K223 carries the post-translational modification N6-acetyllysine. D233, D257, and D261 together coordinate Mg(2+). K343 is modified (N6-acetyllysine; alternate). At K343 the chain carries N6-succinyllysine; alternate. An N6-succinyllysine modification is found at K350.

It belongs to the isocitrate and isopropylmalate dehydrogenases family. In terms of assembly, heterooligomer of subunits alpha (IDH3A), beta (IDH3B), and gamma (IDH3G) in the apparent ratio of 2:1:1. The heterodimer containing one IDH3A and one IDH3B subunit and the heterodimer containing one IDH3A and one IDH3G subunit assemble into a heterotetramer (which contains two subunits of IDH3A, one of IDH3B and one of IDH3G) and further into the heterooctamer. Requires Mg(2+) as cofactor. Mn(2+) is required as a cofactor.

It localises to the mitochondrion. The enzyme catalyses D-threo-isocitrate + NAD(+) = 2-oxoglutarate + CO2 + NADH. The heterotetramer and the heterodimer composed of IDH3A and IDH3G subunits can be allosterically activated by citrate (CIT) or/and ADP, and the two activators can act independently or synergistically. The heterodimer composed of IDH3A and IDH3B subunits cannot be allosterically regulated and the allosteric regulation of the heterotetramer is through the IDH3G subunit and not the IDH3B subunit. The IDH3G subunit contains the allosteric site which consists of a CIT-binding site and an ADP-binding site, and the binding of CIT and ADP causes conformational changes at the allosteric site which are transmitted to the active site in the catalytic subunit (IDH3A) through a cascade of conformational changes at the heterodimer interface, leading to stabilization of the isocitrate-binding at the active site and thus activation of the enzyme. ATP can activate the heterotetramer and the heterodimer composed of IDH3A and IDH3G subunits at low concentrations but inhibits their activities at high concentrations, whereas ATP exhibits only inhibitory effect on the heterodimer composed of IDH3A and IDH3B subunits. Catalytic subunit of the enzyme which catalyzes the decarboxylation of isocitrate (ICT) into alpha-ketoglutarate. The heterodimer composed of the alpha (IDH3A) and beta (IDH3B) subunits and the heterodimer composed of the alpha (IDH3A) and gamma (IDH3G) subunits, have considerable basal activity but the full activity of the heterotetramer (containing two subunits of IDH3A, one of IDH3B and one of IDH3G) requires the assembly and cooperative function of both heterodimers. This chain is Isocitrate dehydrogenase [NAD] subunit alpha, mitochondrial, found in Pongo abelii (Sumatran orangutan).